The following is a 279-amino-acid chain: MTERFDCHHCNESLYGKKYILKEENPHCVACFEELYANTCEECGTPIGCDCKDLSYKDRHWHEGCFHCSRCGSSLVDKPFAAKEEQLLCTDCYSNEYSSKCQECKKTIMPGTRKMEYKGSSWHETCFTCQRCQQPIGTKSFIPKENQNFCVPCYEKQYALQCVQCKKPITTGGVTYRDQPWHRECFVCTACKKQLSGQRFTARDEFPYCLTCFCDLYAKKCAGCTNPISGLGGTKYISFEERQWHNDCFNCKKCSLSLVGRGFLTERDDILCPDCGKDI.

The segment at 7–31 (CHHCNESLYGKKYILKEENPHCVAC) adopts a C4-type zinc-finger fold. LIM zinc-binding domains lie at 40–92 (CEEC…CTDC), 101–153 (CQEC…CVPC), and 162–212 (CVQC…CLTC). Lys-78 is covalently cross-linked (Glycyl lysine isopeptide (Lys-Gly) (interchain with G-Cter in SUMO2)). Residues Lys-167 and Lys-220 each participate in a glycyl lysine isopeptide (Lys-Gly) (interchain with G-Cter in SUMO2) cross-link. Residues 221–275 (CAGCTNPISGLGGTKYISFEERQWHNDCFNCKKCSLSLVGRGFLTERDDILCPDC) form the LIM zinc-binding 4 domain. Phosphoserine is present on Ser-238.

In terms of assembly, interacts with ZNF638 and TTN/titin. Interacts with E4F1. Interacts with GRB7. Interacts with SIRT1 and FOXO1. Interacts with CEFIP and calcineurin. Interacts with FOXK1. As to expression, expressed in heart only (at protein level).

Its subcellular location is the cytoplasm. The protein localises to the nucleus. The protein resides in the myofibril. It is found in the sarcomere. It localises to the z line. In terms of biological role, may function as a molecular transmitter linking various signaling pathways to transcriptional regulation. Negatively regulates the transcriptional repressor E4F1 and may function in cell growth. Inhibits the transcriptional activity of FOXO1 and its apoptotic function by enhancing the interaction of FOXO1 with SIRT1 and FOXO1 deacetylation. Negatively regulates the calcineurin/NFAT signaling pathway in cardiomyocytes. The sequence is that of Four and a half LIM domains protein 2 (Fhl2) from Rattus norvegicus (Rat).